A 485-amino-acid chain; its full sequence is Aspartyl/glutamyl-tRNA(Asn/Gln) amidotransferase subunit B (485 aa).

This sequence belongs to the GatB/GatE family. GatB subfamily. Heterotrimer of A, B and C subunits.

It catalyses the reaction L-glutamyl-tRNA(Gln) + L-glutamine + ATP + H2O = L-glutaminyl-tRNA(Gln) + L-glutamate + ADP + phosphate + H(+). It carries out the reaction L-aspartyl-tRNA(Asn) + L-glutamine + ATP + H2O = L-asparaginyl-tRNA(Asn) + L-glutamate + ADP + phosphate + 2 H(+). Functionally, allows the formation of correctly charged Asn-tRNA(Asn) or Gln-tRNA(Gln) through the transamidation of misacylated Asp-tRNA(Asn) or Glu-tRNA(Gln) in organisms which lack either or both of asparaginyl-tRNA or glutaminyl-tRNA synthetases. The reaction takes place in the presence of glutamine and ATP through an activated phospho-Asp-tRNA(Asn) or phospho-Glu-tRNA(Gln). This chain is Aspartyl/glutamyl-tRNA(Asn/Gln) amidotransferase subunit B, found in Anaplasma marginale (strain Florida).